The sequence spans 248 residues: Adenosylcobinamide-GDP ribazoletransferase (248 aa).

7 helical membrane passes run 32–52 (FPLV…IGMV), 60–80 (ALLV…DGLA), 103–123 (AVGS…WIAL), 134–154 (WIVS…SVMT), 170–190 (AGGW…VLVM), 195–215 (LPIV…GMLA), and 227–247 (LGAS…LLLF).

This sequence belongs to the CobS family. Mg(2+) serves as cofactor.

The protein localises to the cell inner membrane. It carries out the reaction alpha-ribazole + adenosylcob(III)inamide-GDP = adenosylcob(III)alamin + GMP + H(+). The catalysed reaction is alpha-ribazole 5'-phosphate + adenosylcob(III)inamide-GDP = adenosylcob(III)alamin 5'-phosphate + GMP + H(+). The protein operates within cofactor biosynthesis; adenosylcobalamin biosynthesis; adenosylcobalamin from cob(II)yrinate a,c-diamide: step 7/7. Functionally, joins adenosylcobinamide-GDP and alpha-ribazole to generate adenosylcobalamin (Ado-cobalamin). Also synthesizes adenosylcobalamin 5'-phosphate from adenosylcobinamide-GDP and alpha-ribazole 5'-phosphate. This chain is Adenosylcobinamide-GDP ribazoletransferase, found in Prosthecochloris aestuarii (strain DSM 271 / SK 413).